Reading from the N-terminus, the 1152-residue chain is Calcium-activated potassium channel subunit alpha-1 (1152 aa).

A disordered region spans residues 1 to 37 (MSSNIHANHLSLDASSSSSSSSSSSSSSSSSSSSVHE). The Extracellular portion of the chain corresponds to 1-60 (MSSNIHANHLSLDASSSSSSSSSSSSSSSSSSSSVHEPKMDALIIPVTMEVPCDSRGQRM). The span at 15 to 34 (SSSSSSSSSSSSSSSSSSSS) shows a compositional bias: low complexity. Residues 61–81 (WWAFLASSMVTFFGGLFIILL) form a helical membrane-spanning segment. Residues 82-152 (WRTLKYLWTV…MISAQTLTGR (71 aa)) lie on the Cytoplasmic side of the membrane. S-palmitoyl cysteine attachment occurs at residues Cys92, Cys93, and Cys95. Residues 153-173 (VLVVLVFALSIGALVIYFIDS) form a helical membrane-spanning segment. The Extracellular segment spans residues 174–188 (SNPIESCQNFYKDFT). A helical membrane pass occupies residues 189 to 209 (LQIDMAFNVFFLLYFGLRFIA). At 210-213 (ANDK) the chain is on the cytoplasmic side. Residues 214–234 (LWFWLEVNSVVDFFTVPPVFV) form a helical membrane-spanning segment. Topologically, residues 235-238 (SVYL) are extracellular. A helical; Voltage-sensor membrane pass occupies residues 239–259 (NRSWLGLRFLRALRLIQFSEI). At 260-274 (LQFLNILKTSNSIKL) the chain is on the cytoplasmic side. Residues 275–295 (VNLLSIFISTWLTAAGFIHLV) traverse the membrane as a helical segment. Over 296 to 309 (ENSGDPWENFQNNQ) the chain is Extracellular. The pore-forming intramembrane region spans 310-332 (ALTYWECVYLLMVTMSTVGYGDV). Positions 326 to 329 (TVGY) match the Selectivity for potassium motif. At 333 to 341 (YAKTTLGRL) the chain is on the extracellular side. Residues 342–362 (FMVFFILGGLAMFASYVPEII) traverse the membrane as a helical segment. Over 363 to 1152 (ELIGNRKKYG…KQKYVQEERL (790 aa)) the chain is Cytoplasmic. An RCK N-terminal 1 domain is found at 381–523 (RKHIVVCGHI…WNWKEGDDAI (143 aa)). Mg(2+)-binding residues include Glu413, Gln436, and Glu438. The tract at residues 530–550 (LGFIAQSCLAQGLSTMLANLF) is segment S7. A segment S8 region spans residues 587 to 607 (LSFPTVCELCFVKLKLLMIAI). A heme-binding motif region spans residues 651-655 (CKACH). Residues 675–703 (EQPSTLSPKKKQRNGGMRNSPSSSPKLMR) are disordered. Thr679 is modified (phosphothreonine). Phosphoserine is present on residues Ser681, Ser694, and Ser698. The segment at 753 to 773 (VLSGHVVVCIFGDVSSALIGL) is segment S9. The RCK N-terminal 2 domain occupies 755 to 899 (SGHVVVCIFG…MDRSSPDNSP (145 aa)). Thr886 carries the post-translational modification Phosphothreonine. Ser894 and Ser898 each carry phosphoserine. Residues 919 to 941 (TELVNDTNVQFLDQDDDDDPDTE) carry the Calcium bowl motif. 4 residues coordinate Ca(2+): Gln928, Asp931, Asp934, and Asp936. Residues 948 to 968 (FACGTAFAVSVLDSLMSATYF) are segment S10. Over residues 1102-1127 (RASLSHSSHSSQSSSKKSSSVHSIPS) the composition is skewed to low complexity. A disordered region spans residues 1102-1152 (RASLSHSSHSSQSSSKKSSSVHSIPSTANRQNRPKSRESRDKQKYVQEERL). Basic and acidic residues predominate over residues 1136 to 1152 (KSRESRDKQKYVQEERL). 2 positions are modified to phosphoserine: Ser1137 and Ser1140.

It belongs to the potassium channel family. Calcium-activated (TC 1.A.1.3) subfamily. KCa1.1/KCNMA1 sub-subfamily. In terms of assembly, homotetramer; which constitutes the calcium-activated potassium channel. Interacts with beta subunits KCNMB1, KCNMB2, KCNMB3 and KCNMB4. Interacts with gamma subunits LRRC26, LRRC38, LRRC52 and LRRC55. Beta and gamma subunits are accessory, and modulate its activity. Interacts with RAB11B. Phosphorylated. Phosphorylation by kinases such as PKA and/or PKG. In smooth muscles, phosphorylation affects its activity. In terms of processing, palmitoylation by ZDHHC22 and ZDHHC23 within the intracellular linker between the S0 and S1 transmembrane domains regulates localization to the plasma membrane. Depalmitoylated by LYPLA1 and LYPLAL1, leading to retard exit from the trans-Golgi network.

The protein resides in the cell membrane. It carries out the reaction K(+)(in) = K(+)(out). Its activity is regulated as follows. Ethanol and carbon monoxide-bound heme increase channel activation. Heme inhibits channel activation. Potassium channel activated by both membrane depolarization or increase in cytosolic Ca(2+) that mediates export of K(+). It is also activated by the concentration of cytosolic Mg(2+). Its activation dampens the excitatory events that elevate the cytosolic Ca(2+) concentration and/or depolarize the cell membrane. It therefore contributes to repolarization of the membrane potential. Plays a key role in controlling excitability in a number of systems, such as regulation of the contraction of smooth muscle, the tuning of hair cells in the cochlea, regulation of transmitter release, and innate immunity. In smooth muscles, its activation by high level of Ca(2+), caused by ryanodine receptors in the sarcoplasmic reticulum, regulates the membrane potential. In cochlea cells, its number and kinetic properties partly determine the characteristic frequency of each hair cell and thereby helps to establish a tonotopic map. Kinetics of KCNMA1 channels are determined by alternative splicing, phosphorylation status and its combination with modulating beta subunits. Highly sensitive to both iberiotoxin (IbTx) and charybdotoxin (CTX). This is Calcium-activated potassium channel subunit alpha-1 (KCNMA1) from Sus scrofa (Pig).